Consider the following 317-residue polypeptide: Protein rep (317 aa).

Tyrosine 229 contacts DNA.

It belongs to the Gram-positive plasmids replication protein type 1 family.

Produces a single-strand nick in a specific site of the plasmid, and this nick results in single-strand replication by rolling circle mechanism. The chain is Protein rep (rep) from Lactiplantibacillus plantarum (Lactobacillus plantarum).